We begin with the raw amino-acid sequence, 292 residues long: N-acetylneuraminate lyase (292 aa).

The aceneuramate site is built by Ser47 and Thr48. The active-site Proton donor is Tyr136. Lys164 acts as the Schiff-base intermediate with substrate in catalysis. 5 residues coordinate aceneuramate: Thr166, Gly188, Asp190, Glu191, and Ser207.

It belongs to the DapA family. NanA subfamily. Homotetramer.

It is found in the cytoplasm. The catalysed reaction is aceneuramate = aldehydo-N-acetyl-D-mannosamine + pyruvate. It participates in amino-sugar metabolism; N-acetylneuraminate degradation; D-fructose 6-phosphate from N-acetylneuraminate: step 1/5. Catalyzes the reversible aldol cleavage of N-acetylneuraminic acid (sialic acid; Neu5Ac) to form pyruvate and N-acetylmannosamine (ManNAc) via a Schiff base intermediate. The sequence is that of N-acetylneuraminate lyase from Histophilus somni (strain 129Pt) (Haemophilus somnus).